The sequence spans 338 residues: DNA-directed RNA polymerase subunit alpha (338 aa).

Residues 1–234 form an alpha N-terminal domain (alpha-NTD) region; sequence MIHKNWAELI…DQLSIFVNFE (234 aa). Positions 250–338 are alpha C-terminal domain (alpha-CTD); it reads FNPLLLKKVD…DLAKRFEDQF (89 aa).

This sequence belongs to the RNA polymerase alpha chain family. As to quaternary structure, homodimer. The RNAP catalytic core consists of 2 alpha, 1 beta, 1 beta' and 1 omega subunit. When a sigma factor is associated with the core the holoenzyme is formed, which can initiate transcription.

It carries out the reaction RNA(n) + a ribonucleoside 5'-triphosphate = RNA(n+1) + diphosphate. In terms of biological role, DNA-dependent RNA polymerase catalyzes the transcription of DNA into RNA using the four ribonucleoside triphosphates as substrates. The sequence is that of DNA-directed RNA polymerase subunit alpha from Cereibacter sphaeroides (strain ATCC 17029 / ATH 2.4.9) (Rhodobacter sphaeroides).